The chain runs to 207 residues: Outer-membrane lipoprotein LolB (207 aa).

An N-terminal signal peptide occupies residues 1–21 (MTLPDFRLIRLLPLASLVLTA). Cys22 is lipidated: N-palmitoyl cysteine. The S-diacylglycerol cysteine moiety is linked to residue Cys22.

It belongs to the LolB family. Monomer.

The protein resides in the cell outer membrane. Plays a critical role in the incorporation of lipoproteins in the outer membrane after they are released by the LolA protein. The polypeptide is Outer-membrane lipoprotein LolB (Salmonella typhi).